The chain runs to 548 residues: Fumarate hydratase class I, aerobic (548 aa).

Residues C105, C224, and C318 each contribute to the [4Fe-4S] cluster site.

This sequence belongs to the class-I fumarase family. Homodimer. [4Fe-4S] cluster is required as a cofactor.

It carries out the reaction (S)-malate = fumarate + H2O. The enzyme catalyses oxaloacetate = enol-oxaloacetate. The protein operates within carbohydrate metabolism; tricarboxylic acid cycle; (S)-malate from fumarate: step 1/1. In terms of biological role, catalyzes the reversible hydration of fumarate to (S)-malate. Functions as an aerobic enzyme in the direction of malate formation as part of the citric acid cycle. Accounts for about 80% of the fumarase activity when the bacteria grow aerobically. To a lesser extent, also displays D-tartrate dehydratase activity in vitro, but is not able to convert (R)-malate, L-tartrate or meso-tartrate. Can also catalyze the isomerization of enol- to keto-oxaloacetate. This Escherichia coli O6:H1 (strain CFT073 / ATCC 700928 / UPEC) protein is Fumarate hydratase class I, aerobic.